Reading from the N-terminus, the 168-residue chain is uncharacterized protein (168 aa).

4 consecutive transmembrane segments (helical) span residues 1-21 (MFWL…AVAR), 41-61 (PYII…VLLM), 68-88 (WWLG…WALC), and 123-143 (VILE…MCLF).

It is found in the cell membrane. This is an uncharacterized protein from Bacillus subtilis (strain 168).